The following is a 388-amino-acid chain: Granulocyte-macrophage colony-stimulating factor receptor subunit alpha (388 aa).

The N-terminal stretch at 1–29 (MTSSHAMNITPLAQLALLFSTLLLPGTQA) is a signal peptide. Residues 30-327 (LLAPTTPDAG…PLEAEDTRVP (298 aa)) lie on the Extracellular side of the membrane. Residues Asn43, Asn63, Asn106, Asn132, Asn165, and Asn237 are each glycosylated (N-linked (GlcNAc...) asparagine). Residues 228–324 (PPRDVTASCN…PAHPLEAEDT (97 aa)) form the Fibronectin type-III domain. The short motif at 310 to 314 (WGEWS) is the WSXWS motif element. The helical transmembrane segment at 328 to 348 (GALLYAVTACAVLLCALALGV) threads the bilayer. Topologically, residues 349 to 388 (TCRRFEVTRRLFPPIPGIRDKVSDDVRVNPETLRKDLLQP) are cytoplasmic. The Box 1 motif motif lies at 359–367 (LFPPIPGIR).

This sequence belongs to the type I cytokine receptor family. Type 5 subfamily. In terms of assembly, heterodimer of an alpha and a beta subunit. The beta subunit is common to the IL3, IL5 and GM-CSF receptors. The signaling GM-CSF receptor complex is a dodecamer of two head-to-head hexamers of two alpha, two beta, and two ligand subunits.

The protein localises to the membrane. In terms of biological role, low affinity receptor for granulocyte-macrophage colony-stimulating factor. Transduces a signal that results in the proliferation, differentiation, and functional activation of hematopoietic cells. The chain is Granulocyte-macrophage colony-stimulating factor receptor subunit alpha (Csf2ra) from Mus musculus (Mouse).